The primary structure comprises 443 residues: tRNA-2-methylthio-N(6)-dimethylallyladenosine synthase (443 aa).

Positions 3–120 constitute an MTTase N-terminal domain; the sequence is SKLYIRTFGC…LPDLIDARRR (118 aa). C12, C49, C83, C157, C161, and C164 together coordinate [4Fe-4S] cluster. A Radical SAM core domain is found at 143–375; that stretch reads RTEGSTAFVS…QEKIQLNAQA (233 aa). A TRAM domain is found at 378 to 441; the sequence is QGMVDTVQRI…SHTLRGEISD (64 aa).

The protein belongs to the methylthiotransferase family. MiaB subfamily. In terms of assembly, monomer. It depends on [4Fe-4S] cluster as a cofactor.

It is found in the cytoplasm. The enzyme catalyses N(6)-dimethylallyladenosine(37) in tRNA + (sulfur carrier)-SH + AH2 + 2 S-adenosyl-L-methionine = 2-methylsulfanyl-N(6)-dimethylallyladenosine(37) in tRNA + (sulfur carrier)-H + 5'-deoxyadenosine + L-methionine + A + S-adenosyl-L-homocysteine + 2 H(+). Catalyzes the methylthiolation of N6-(dimethylallyl)adenosine (i(6)A), leading to the formation of 2-methylthio-N6-(dimethylallyl)adenosine (ms(2)i(6)A) at position 37 in tRNAs that read codons beginning with uridine. The chain is tRNA-2-methylthio-N(6)-dimethylallyladenosine synthase from Nitrosomonas europaea (strain ATCC 19718 / CIP 103999 / KCTC 2705 / NBRC 14298).